We begin with the raw amino-acid sequence, 718 residues long: Amino-acid acetyltransferase, mitochondrial (718 aa).

The N-terminal 36 residues, 1-36 (MNPNAVWPRTAQSSLKKHQVSLCTCQRRSHYRLRSF), are a transit peptide targeting the mitochondrion. Residues 97–116 (QHQPDLPQKPTSAPASTAKI) are disordered. The 170-residue stretch at 539-708 (RQPRLRLDDP…YEAVCRSIQP (170 aa)) folds into the N-acetyltransferase domain.

Belongs to the acetyltransferase family.

It is found in the mitochondrion. It carries out the reaction L-glutamate + acetyl-CoA = N-acetyl-L-glutamate + CoA + H(+). It participates in amino-acid biosynthesis; L-arginine biosynthesis; N(2)-acetyl-L-ornithine from L-glutamate: step 1/4. Functionally, N-acetylglutamate synthase involved in arginine biosynthesis. This chain is Amino-acid acetyltransferase, mitochondrial (arg2), found in Aspergillus clavatus (strain ATCC 1007 / CBS 513.65 / DSM 816 / NCTC 3887 / NRRL 1 / QM 1276 / 107).